Consider the following 914-residue polypeptide: Translation initiation factor IF-2 (914 aa).

2 disordered regions span residues 52 to 84 (GGGK…VKAP) and 98 to 326 (AGGN…GVRL). Low complexity predominate over residues 57 to 68 (AEGAAKAPAKAA). The span at 69–84 (AKGDAKTAAKGDVKAP) shows a compositional bias: basic and acidic residues. Positions 98 to 138 (AGGNGEAAAPPAQPGGTATTPAAQATPEAPARPGPAAARPS) are enriched in low complexity. Composition is skewed to pro residues over residues 139–169 (APAP…PAPK) and 193–207 (PRPV…PGAP). A compositionally biased stretch (gly residues) spans 236-296 (RPGGGRPGGP…GAAGAFGRPG (61 aa)). Basic residues predominate over residues 300 to 309 (RRGRKSKRQK). A tr-type G domain is found at 421-581 (TRPPVVTVMG…AVLLTADAAL (161 aa)). GTP is bound by residues 430–437 (GHVDHGKT), 469–473 (DTPGH), and 523–526 (NKID).

It belongs to the TRAFAC class translation factor GTPase superfamily. Classic translation factor GTPase family. IF-2 subfamily.

The protein localises to the cytoplasm. Functionally, one of the essential components for the initiation of protein synthesis. Protects formylmethionyl-tRNA from spontaneous hydrolysis and promotes its binding to the 30S ribosomal subunits. Also involved in the hydrolysis of GTP during the formation of the 70S ribosomal complex. This Mycobacterium avium (strain 104) protein is Translation initiation factor IF-2.